The sequence spans 55 residues: Large ribosomal subunit protein bL32c (55 aa).

It belongs to the bacterial ribosomal protein bL32 family.

It localises to the plastid. Its subcellular location is the chloroplast. In Atropa belladonna (Belladonna), this protein is Large ribosomal subunit protein bL32c.